Here is a 657-residue protein sequence, read N- to C-terminus: MEMETTEPEPDCVVQPPSPPDDFSCQMRLSEKITPLKTCFKKKDQKRLGTGTLRSLRPILNTLLESGSLDGVFRSRNQSTDENSLHEPMMKKAMEINSSCPPAENNMSVLIPDRTNVGDQIPEAHPSTEAPERVVPIQDHSFPSETLSGTVADSTPAHFQTDLLHPVSSDVPTSPDCLDKVIDYVPGIFQENSFTIQYILDTSDKLSTELFQDKSEEASLDLVFELVNQLQYHTHQENGIEICMDFLQGTCIYGRDCLKHHTVLPYHWQIKRTTTQKWQSVFNDSQEHLERFYCNPENDRMRMKYGGQEFWADLNAMNVYETTEFDQLRRLSTPPSSNVNSIYHTVWKFFCRDHFGWREYPESVIRLIEEANSRGLKEVRFMMWNNHYILHNSFFRREIKRRPLFRSCFILLPYLQTLGGVPTQAPPPLEATSSSQIICPDGVTSANFYPETWVYMHPSQDFIQVPVSAEDKSYRIIYNLFHKTVPEFKYRILQILRVQNQFLWEKYKRKKEYMNRKMFGRDRIINERHLFHGTSQDVVDGICKHNFDPRVCGKHATMFGQGSYFAKKASYSHNFSKKSSKGVHFMFLAKVLTGRYTMGSHGMRRPPPVNPGSVTSDLYDSCVDNFFEPQIFVIFNDDQSYPYFVIQYEEVSNTVSI.

A compositionally biased stretch (acidic residues) spans 1–10 (MEMETTEPEP). Residues 1-21 (MEMETTEPEPDCVVQPPSPPD) are disordered. ADP-ribosylcysteine is present on Cys-39. Residues 41–47 (KKKDQKR) carry the Nuclear localization signal motif. The C3H1-type zinc finger occupies 237–264 (ENGIEICMDFLQGTCIYGRDCLKHHTVL). A WWE domain is found at 332–410 (STPPSSNVNS…RRPLFRSCFI (79 aa)). Residues 449–657 (YPETWVYMHP…YEEVSNTVSI (209 aa)) enclose the PARP catalytic domain.

This sequence belongs to the ARTD/PARP family. Interacts with AHR. In terms of processing, auto-mono-ADP-ribosylated.

Its subcellular location is the nucleus. It catalyses the reaction L-aspartyl-[protein] + NAD(+) = 4-O-(ADP-D-ribosyl)-L-aspartyl-[protein] + nicotinamide. The catalysed reaction is L-glutamyl-[protein] + NAD(+) = 5-O-(ADP-D-ribosyl)-L-glutamyl-[protein] + nicotinamide. The enzyme catalyses L-cysteinyl-[protein] + NAD(+) = S-(ADP-D-ribosyl)-L-cysteinyl-[protein] + nicotinamide + H(+). With respect to regulation, ADP-ribosyltransferase activity is inhibited by PJ34; inhibition is however not specific to TIPARP and other PARP-domain containing proteins are also inhibited by PJ34. Partially inhibited by KU0058948. ADP-ribosyltransferase that mediates mono-ADP-ribosylation of glutamate, aspartate and cysteine residues on target proteins. Acts as a negative regulator of AHR by mediating mono-ADP-ribosylation of AHR, leading to inhibit transcription activator activity of AHR. The protein is Protein mono-ADP-ribosyltransferase TIPARP of Homo sapiens (Human).